The primary structure comprises 146 residues: Putative pre-16S rRNA nuclease (146 aa).

This sequence belongs to the YqgF nuclease family.

The protein resides in the cytoplasm. In terms of biological role, could be a nuclease involved in processing of the 5'-end of pre-16S rRNA. This is Putative pre-16S rRNA nuclease from Burkholderia thailandensis (strain ATCC 700388 / DSM 13276 / CCUG 48851 / CIP 106301 / E264).